We begin with the raw amino-acid sequence, 92 residues long: Putative regulatory protein CA_C1717 (92 aa).

Belongs to the RemA family.

This is Putative regulatory protein CA_C1717 from Clostridium acetobutylicum (strain ATCC 824 / DSM 792 / JCM 1419 / IAM 19013 / LMG 5710 / NBRC 13948 / NRRL B-527 / VKM B-1787 / 2291 / W).